We begin with the raw amino-acid sequence, 164 residues long: MAFKDNAVELEERVVAINRVTKVVKGGRRLRFAALVVVGDRNGRVGFGTGKAQEVPEAIRKAVEDAKKNLIEVPMVGTTIPHEVLSEFGGAKVLLKPAVEGSGVAAGGAVRAVIELAGVADVTSKSLGSNTPINIVRATVEGLKQLKRAEEVAALRGISVSDLA.

Residues 10–73 (LEERVVAINR…EDAKKNLIEV (64 aa)) enclose the S5 DRBM domain.

Belongs to the universal ribosomal protein uS5 family. Part of the 30S ribosomal subunit. Contacts proteins S4 and S8.

Its function is as follows. With S4 and S12 plays an important role in translational accuracy. Located at the back of the 30S subunit body where it stabilizes the conformation of the head with respect to the body. The sequence is that of Small ribosomal subunit protein uS5 from Streptococcus gordonii (strain Challis / ATCC 35105 / BCRC 15272 / CH1 / DL1 / V288).